The sequence spans 266 residues: Coiled-coil domain-containing glutamate-rich protein 2 (266 aa).

Residues 1–23 form the signal peptide; it reads MPPRGPASELLLLRLLLLGAATA. Basic and acidic residues-rich tracts occupy residues 90 to 100, 154 to 188, 204 to 213, and 221 to 266; these read EAGKMRSSQEV, LWQR…EKGV, GGGERREDLP, and QPEA…RREG. The disordered stretch occupies residues 90–266; that stretch reads EAGKMRSSQE…TLGEQLRREG (177 aa).

As to expression, expressed at higher levels in fetal brain and skeletal muscle. Lower expression is detected in fetal kidney, liver, spleen, thymus, heart and lung.

It is found in the secreted. This Homo sapiens (Human) protein is Coiled-coil domain-containing glutamate-rich protein 2 (CCER2).